We begin with the raw amino-acid sequence, 747 residues long: Sulfhydryl oxidase 1 (747 aa).

A signal peptide spans 1 to 29 (MRRCNSGSGPPPSLLLLLLWLLAVPGANA). Residues 36–156 (YSPSDPLTLL…RERLIDALES (121 aa)) enclose the Thioredoxin domain. Active-site nucleophile residues include C70 and C73. 2 disulfides stabilise this stretch: C70–C73 and C101–C110. N130 carries an N-linked (GlcNAc...) (complex) asparagine glycan. Residue N243 is glycosylated (N-linked (GlcNAc...) asparagine). A disulfide bridge links C393 with C405. The region spanning 396–503 (SEPHFRGFPC…EDPQFPKVQW (108 aa)) is the ERV/ALR sulfhydryl oxidase domain. FAD contacts are provided by R401, W408, and H412. At S426 the chain carries Phosphoserine; by FAM20C. An intrachain disulfide couples C449 to C452. FAD is bound by residues D451, H455, 478–485 (WSSHNRVN), K500, and W503. C509 and C512 are oxidised to a cystine. Residues 573 to 633 (SRNSTLDPGK…HMAELQRNEQ (61 aa)) are disordered. N-linked (GlcNAc...) asparagine glycosylation occurs at N575. The segment covering 621 to 633 (PPEHMAELQRNEQ) has biased composition (basic and acidic residues). Residues 710–730 (ISLCVGLYSLSFMGLLAMYTY) form a helical membrane-spanning segment.

It belongs to the quiescin-sulfhydryl oxidase (QSOX) family. Monomer. FAD is required as a cofactor. In terms of processing, N-glycosylated. O-glycosylated on Thr and Ser residues. In terms of tissue distribution, expressed in heart, placenta, lung, liver, skeletal muscle, pancreas and very weakly in brain and kidney.

Its subcellular location is the golgi apparatus membrane. The protein localises to the secreted. The enzyme catalyses 2 R'C(R)SH + O2 = R'C(R)S-S(R)CR' + H2O2. Catalyzes the oxidation of sulfhydryl groups in peptide and protein thiols to disulfides with the reduction of oxygen to hydrogen peroxide. Plays a role in disulfide bond formation in a variety of extracellular proteins. In fibroblasts, required for normal incorporation of laminin into the extracellular matrix, and thereby for normal cell-cell adhesion and cell migration. The polypeptide is Sulfhydryl oxidase 1 (QSOX1) (Homo sapiens (Human)).